Reading from the N-terminus, the 440-residue chain is 23S rRNA (uracil(1939)-C(5))-methyltransferase RlmD (440 aa).

Residues 10-68 (KSTQPQRIEFTVDSLDHHCVGIGRHQGKAIFIEGALPGELVKARILEDKKQYAHAALQQ) enclose the TRAM domain. Residues Cys81, Cys87, Cys90, and Cys169 each coordinate [4Fe-4S] cluster. Residues Gln273, Phe302, Asn307, Glu323, Asp350, and Asp371 each contribute to the S-adenosyl-L-methionine site. Cys397 (nucleophile) is an active-site residue.

Belongs to the class I-like SAM-binding methyltransferase superfamily. RNA M5U methyltransferase family. RlmD subfamily.

It catalyses the reaction uridine(1939) in 23S rRNA + S-adenosyl-L-methionine = 5-methyluridine(1939) in 23S rRNA + S-adenosyl-L-homocysteine + H(+). Catalyzes the formation of 5-methyl-uridine at position 1939 (m5U1939) in 23S rRNA. This Aeromonas hydrophila subsp. hydrophila (strain ATCC 7966 / DSM 30187 / BCRC 13018 / CCUG 14551 / JCM 1027 / KCTC 2358 / NCIMB 9240 / NCTC 8049) protein is 23S rRNA (uracil(1939)-C(5))-methyltransferase RlmD.